Consider the following 548-residue polypeptide: Putative F-box protein At1g33020 (548 aa).

The F-box domain occupies 4 to 53 (AENLDSIPTDLILEIFSRMSTKSIGRCRCVSKLWKSMLGHPYFTELFLTR). The tract at residues 380–404 (KPISPPKQKPKPPSTETSSREDHQG) is disordered. Residues 382–392 (ISPPKQKPKPP) show a composition bias toward pro residues.

The protein is Putative F-box protein At1g33020 of Arabidopsis thaliana (Mouse-ear cress).